The sequence spans 303 residues: MYIQVLGSAAGGGFPQWNCNCVNCKGYRDGTLKATARTQSSIALSDDGVHWILCNASPDIRAQLQAFAPMQPARALRDTGINAIVLLDSQIDHTTGLLSLREGCPHQVWCTDMVHQDLTTGFPLFNMLSHWNGGLQWNRIELEGSFVIDACPNLKFTPFPLRSAAPPYSPHRFDPHPGDNLGLMVEDTRTGGKLFYAPGLGQVDEKLLAMMHGADCLLVDGTLWEDDEMQRRGVGTRTGREMGHLAQNGPGGMLEVLDGFPRQRKVLIHINNTNPILDEDSPERAEVLRRGVEVAFDGMSIAL.

Belongs to the PqqB family.

The protein operates within cofactor biosynthesis; pyrroloquinoline quinone biosynthesis. May be involved in the transport of PQQ or its precursor to the periplasm. This chain is Coenzyme PQQ synthesis protein B, found in Pseudomonas putida (strain ATCC 700007 / DSM 6899 / JCM 31910 / BCRC 17059 / LMG 24140 / F1).